We begin with the raw amino-acid sequence, 249 residues long: uncharacterized protein (249 aa).

The S4 RNA-binding domain maps to 4–71; the sequence is VRINKFLSEA…RKRYIILNKP (68 aa). The active-site Nucleophile is the aspartate 106.

The protein belongs to the pseudouridine synthase RsuA family.

The enzyme catalyses a uridine in RNA = a pseudouridine in RNA. This is an uncharacterized protein from Aquifex aeolicus (strain VF5).